The chain runs to 403 residues: Queuine tRNA-ribosyltransferase catalytic subunit 1 (403 aa).

Position 2 is an N-acetylalanine (A2). Catalysis depends on D105, which acts as the Proton acceptor. 105–109 contributes to the queuine binding site; it reads DSGGF. S139 carries the phosphoserine modification. 3 residues coordinate queuine: D159, Q202, and G229. The interval 260-266 is RNA binding; that stretch reads GVGYATD. D279 serves as the catalytic Nucleophile. The interval 284–288 is RNA binding; important for wobble base 34 recognition; it reads TRTAR. Zn(2+) is bound by residues C317, C319, C322, and H348.

Belongs to the queuine tRNA-ribosyltransferase family. As to quaternary structure, heterodimer of a catalytic subunit QTRT1 and an accessory subunit QTRT2. It depends on Zn(2+) as a cofactor. Expressed in brain, heart, kidney, liver, ling, skeletal muscle, spleen and testis.

Its subcellular location is the cytoplasm. The protein resides in the mitochondrion outer membrane. It localises to the nucleus. The catalysed reaction is guanosine(34) in tRNA + queuine = queuosine(34) in tRNA + guanine. Its function is as follows. Catalytic subunit of the queuine tRNA-ribosyltransferase (TGT) that catalyzes the base-exchange of a guanine (G) residue with queuine (Q) at position 34 (anticodon wobble position) in tRNAs with GU(N) anticodons (tRNA-Asp, -Asn, -His and -Tyr), resulting in the hypermodified nucleoside queuosine (7-(((4,5-cis-dihydroxy-2-cyclopenten-1-yl)amino)methyl)-7-deazaguanosine). Catalysis occurs through a double-displacement mechanism. The nucleophile active site attacks the C1' of nucleotide 34 to detach the guanine base from the RNA, forming a covalent enzyme-RNA intermediate. The proton acceptor active site deprotonates the incoming queuine, allowing a nucleophilic attack on the C1' of the ribose to form the product. Modification of cytoplasmic tRNAs with queuosine controls the elongation speed of cognate codons, thereby ensuring the correct folding of nascent proteins to maintain proteome integrity. This chain is Queuine tRNA-ribosyltransferase catalytic subunit 1, found in Mus musculus (Mouse).